We begin with the raw amino-acid sequence, 930 residues long: A disintegrin and metalloproteinase with thrombospondin motifs 5 (930 aa).

The first 21 residues, 1-21 (MRLEWAPLLLLLLLLSASCLS), serve as a signal peptide directing secretion. A propeptide spanning residues 22-261 (LAADSPAAAP…PQTWWRRRRR (240 aa)) is cleaved from the precursor. The span at 31–53 (PAQDKTRQPQAAAAAAEPDQPQG) shows a compositional bias: low complexity. Disordered regions lie at residues 31 to 68 (PAQD…LAGQ) and 207 to 231 (ASCE…SRRR). Residues 207–214 (ASCETPAS) carry the Cysteine switch motif. Residue Cys-209 coordinates Zn(2+). A compositionally biased stretch (polar residues) spans 211 to 225 (TPASPSGPQESPSVH). Residues 267-476 (RQVELLLVAD…GHGNCLLDLP (210 aa)) form the Peptidase M12B domain. Cystine bridges form between Cys-342–Cys-394, Cys-371–Cys-376, Cys-388–Cys-471, Cys-426–Cys-455, Cys-497–Cys-519, Cys-508–Cys-529, Cys-514–Cys-548, and Cys-542–Cys-553. His-410 serves as a coordination point for Zn(2+). The active site involves Glu-411. The Zn(2+) site is built by His-414 and His-420. Residues 485–566 (ELPGQTYDAT…TKKKYYSTSS (82 aa)) form the Disintegrin domain. Asn-498 carries N-linked (GlcNAc...) asparagine glycosylation. The 56-residue stretch at 567–622 (HGNWGSWGPWGQCSRSCGGGVQFAYRHCNNPAPRNSGRYCTGKRAIYRSCSVTPCP) folds into the TSP type-1 1 domain. 2 C-linked (Man) tryptophan glycosylation sites follow: Trp-570 and Trp-573. 3 disulfide bridges follow: Cys-579–Cys-616, Cys-583–Cys-621, and Cys-594–Cys-606. A glycan (O-linked (Fuc...) serine) is linked at Ser-582. N-linked (GlcNAc...) asparagine glycosylation is found at Asn-728, Asn-802, and Asn-807. Residues 732–874 (TKIIGTFNKK…HGSNKVGPHS (143 aa)) are spacer. The TSP type-1 2 domain maps to 875–929 (TQLQWVTGPWLACSRTCDTGWHTRTVQCQDGNRKLAKGCLLSQRPSAFKQCLLKK).

It depends on Zn(2+) as a cofactor. The precursor is cleaved by furin and PCSK7 outside of the cell. Post-translationally, glycosylated. Can be O-fucosylated by POFUT2 on a serine or a threonine residue found within the consensus sequence C1-X(2)-(S/T)-C2-G of the TSP type-1 repeat domains where C1 and C2 are the first and second cysteine residue of the repeat, respectively. Fucosylated repeats can then be further glycosylated by the addition of a beta-1,3-glucose residue by the glucosyltransferase, B3GALTL. Fucosylation mediates the efficient secretion of ADAMTS family members. Can also be C-glycosylated with one or two mannose molecules on tryptophan residues within the consensus sequence W-X-X-W of the TPRs, and N-glycosylated. These other glycosylations can also facilitate secretion. In terms of tissue distribution, expressed in skeletal muscle.

The protein resides in the secreted. It is found in the extracellular space. Its subcellular location is the extracellular matrix. Metalloproteinase that plays an important role in connective tissue organization, development, inflammation and cell migration. Extracellular matrix (ECM) degrading enzyme that shows proteolytic activity toward the hyalectan group of chondroitin sulfate proteoglycans (CSPGs) including ACAN, VCAN, BCAN and NCAN. Cleavage within the hyalectans occurs at Glu-Xaa recognition motifs. Plays a role in embryonic development, including limb and cardiac morphogenesis, and skeletal muscle development through its VCAN remodeling properties. Cleaves VCAN in the pericellular matrix surrounding myoblasts, facilitating myoblast contact and fusion which is required for skeletal muscle development and regeneration. Participates in the development of brown adipose tissue and browning of white adipose tissue. Plays an important role for T-lymphocyte migration from draining lymph nodes following viral infection. The protein is A disintegrin and metalloproteinase with thrombospondin motifs 5 (Adamts5) of Mus musculus (Mouse).